The sequence spans 628 residues: MSHRILCVAFCVCSLVAVSSIYSPPFNHPIVYSNNAICFQLSTWRIPQLYLAVLIRRFDLSLSTRGVMLAVTVGVGSSQHHSQRSGLSLTFAMTPSMITLLVKTCVISQRTAVGEPHRPGWVWEVGRTEDETCHAHSPRGAPCHQGRIPLYSAAVESVDQIQVAVRFAQRHRLRLVVRNTGHDTAGRSSGSDSFQIHCHRMKQIEYHDNFRALGSDIDRGPAVSVGAGVTLGEMYARGARDGWVVVGGECPTVGAAGGFLQGGGVSSFHSFIDGLAVDNVLEFEVVTAKGDVVVANDHQNPDIFWALRGGGGGTFGIVTRATMRVHLNSPVCVSEVAVSGLRNNSLLWTKGITGLFSILRSFNQQGIPGQFILRPLSKDQVNASLTLYSLNTDDTRRSAENMLSIRNILESTTLPFTLASRCLPKISDALRKGPDMLPVNYGIITGSVLVSEDLFNSEEGPLHLAKQLEHFPMGPMDLLFTSNLGGNVSANTGKKHRDTSMHPGWRQAAHLINFVRSVSTPTAHEKARSLEELHSVQMRQLYDIEPDFRVSYRNLGDPLESDAAQVYWGPNYKRLLEIKRKWDPEDLFFSQLGVGSEGWTEDQMCKRQQRLQQMLQYLMSSIAQRVYR.

Residues 1 to 20 (MSHRILCVAFCVCSLVAVSS) form the signal peptide. An FAD-binding PCMH-type domain is found at 144-328 (HQGRIPLYSA…TRATMRVHLN (185 aa)). His182 is subject to Pros-8alpha-FAD histidine. N-linked (GlcNAc...) asparagine glycosylation is found at Asn343, Asn382, and Asn487.

Belongs to the oxygen-dependent FAD-linked oxidoreductase family. The cofactor is FAD.

The protein operates within alkaloid biosynthesis; ergot alkaloid biosynthesis. Functionally, FAD binding oxidoreductase; part of the gene cluster that mediates the biosynthesis of fumiclavanine C, a fungal ergot alkaloid. DmaW catalyzes the first step of ergot alkaloid biosynthesis by condensing dimethylallyl diphosphate (DMAP) and tryptophan to form 4-dimethylallyl-L-tryptophan. The second step is catalyzed by the methyltransferase easF that methylates 4-dimethylallyl-L-tryptophan in the presence of S-adenosyl-L-methionine, resulting in the formation of 4-dimethylallyl-L-abrine. The catalase easC and the FAD-dependent oxidoreductase easE then transform 4-dimethylallyl-L-abrine to chanoclavine-I which is further oxidized by EasD in the presence of NAD(+), resulting in the formation of chanoclavine-I aldehyde. EasA reduces chanoclavine-I aldehyde to dihydrochanoclavine-I aldehyde that spontaneously dehydrates to form 6,8-dimethyl-6,7-didehydroergoline. EasG then catalyzes the reduction of 6,8-dimethyl-6,7-didehydroergoline to form festuclavine. Hydrolysis of festuclavine by easM then leads to the formation of fumigaclavine B which is in turn acetylated by easN to fumigaclavine A. Finally, easL catalyzes the conversion of fumigaclavine A into fumigaclavine C by attaching a dimethylallyl moiety to C-2 of the indole nucleus. The chain is FAD-linked oxidoreductase easE from Aspergillus fumigatus (strain ATCC MYA-4609 / CBS 101355 / FGSC A1100 / Af293) (Neosartorya fumigata).